The primary structure comprises 242 residues: Venom nerve growth factor 3 (242 aa).

Residues 1–18 (MSMLCYTLIIAFLIGIWA) form the signal peptide. Residues 19 to 125 (APKSEDNVPL…ALNRNIRSKR (107 aa)) constitute a propeptide that is removed on maturation. The segment covering 48 to 66 (LKTSRNTDQRHPAPKKAED) has biased composition (basic and acidic residues). The disordered stretch occupies residues 48–69 (LKTSRNTDQRHPAPKKAEDQEL). Disulfide bonds link Cys-139-Cys-203, Cys-181-Cys-231, and Cys-191-Cys-233. Asn-147 carries an N-linked (GlcNAc...) asparagine glycan.

It belongs to the NGF-beta family. In terms of assembly, homodimer; non-covalently linked. As to expression, expressed by the venom gland.

The protein localises to the secreted. Its function is as follows. Nerve growth factor is important for the development and maintenance of the sympathetic and sensory nervous systems. It stimulates division and differentiation of sympathetic and embryonic sensory neurons as well as basal forebrain cholinergic neurons in the brain. Its relevance in the snake venom is not clear. However, it has been shown to inhibit metalloproteinase-dependent proteolysis of platelet glycoprotein Ib alpha, suggesting a metalloproteinase inhibition to prevent metalloprotease autodigestion and/or protection against prey proteases. Binds a lipid between the two protein chains in the homodimer. The lipid-bound form promotes histamine relase from mouse mast cells, contrary to the lipid-free form. The chain is Venom nerve growth factor 3 from Demansia vestigiata (Lesser black whip snake).